We begin with the raw amino-acid sequence, 236 residues long: MLTEGISIQSYDGHTFGALVGSPAKAPAPVIVIAQEIFGVNAFMRETVSWLVDQGYAAVCPDLYARQAPGTALDPQDERQREQAYKLWQAFDMEAGVGDLEAAIRYARHQPYSNGKVGLVGYCLGGALAFLVAAKGYVDRAVGYYGVGLEKQLKKVPEVKHPALFHMGGQDHFVPAPSRQLITEGFGANPLLQVHWYEEAGHSFARTSSSGYVASAAALANERRLDFLAPLQSKKP.

Active-site residues include C123, D171, and H202.

It belongs to the dienelactone hydrolase family. In terms of assembly, monomer.

The catalysed reaction is 2-(5-oxo-2,5-dihydrofuran-2-ylidene)acetate + H2O = 4-oxohex-2-enedioate + H(+). Its pathway is aromatic compound metabolism; 3-chlorocatechol degradation. Functionally, ring cleavage of cyclic ester dienelactone to produce maleylacetate. In Pseudomonas knackmussii (strain DSM 6978 / CCUG 54928 / LMG 23759 / B13), this protein is Carboxymethylenebutenolidase (clcD).